The chain runs to 406 residues: Bifunctional enzyme IspD/IspF (406 aa).

The segment at 1 to 247 is 2-C-methyl-D-erythritol 4-phosphate cytidylyltransferase; sequence MSLIRVNGEA…ALFFNPAKDT (247 aa). A 2-C-methyl-D-erythritol 2,4-cyclodiphosphate synthase region spans residues 248–406; it reads FIGMGFDTHA…HVSMRYKQKL (159 aa). A divalent metal cation is bound by residues Asp-254 and His-256. Residues 254-256 and 280-281 contribute to the 4-CDP-2-C-methyl-D-erythritol 2-phosphate site; these read DTH and HS. Position 288 (His-288) interacts with a divalent metal cation. 4-CDP-2-C-methyl-D-erythritol 2-phosphate contacts are provided by residues 302 to 304, 307 to 311, 378 to 381, Phe-385, and Lys-388; these read DIG, FPDND, and TTME.

In the N-terminal section; belongs to the IspD/TarI cytidylyltransferase family. IspD subfamily. This sequence in the C-terminal section; belongs to the IspF family. A divalent metal cation serves as cofactor.

The enzyme catalyses 2-C-methyl-D-erythritol 4-phosphate + CTP + H(+) = 4-CDP-2-C-methyl-D-erythritol + diphosphate. It carries out the reaction 4-CDP-2-C-methyl-D-erythritol 2-phosphate = 2-C-methyl-D-erythritol 2,4-cyclic diphosphate + CMP. It functions in the pathway isoprenoid biosynthesis; isopentenyl diphosphate biosynthesis via DXP pathway; isopentenyl diphosphate from 1-deoxy-D-xylulose 5-phosphate: step 2/6. It participates in isoprenoid biosynthesis; isopentenyl diphosphate biosynthesis via DXP pathway; isopentenyl diphosphate from 1-deoxy-D-xylulose 5-phosphate: step 4/6. Functionally, bifunctional enzyme that catalyzes the formation of 4-diphosphocytidyl-2-C-methyl-D-erythritol from CTP and 2-C-methyl-D-erythritol 4-phosphate (MEP) (IspD), and catalyzes the conversion of 4-diphosphocytidyl-2-C-methyl-D-erythritol 2-phosphate (CDP-ME2P) to 2-C-methyl-D-erythritol 2,4-cyclodiphosphate (ME-CPP) with a corresponding release of cytidine 5-monophosphate (CMP) (IspF). In Helicobacter pylori (strain P12), this protein is Bifunctional enzyme IspD/IspF.